Reading from the N-terminus, the 209-residue chain is Large ribosomal subunit protein uL3 (209 aa).

The tract at residues 128-163 (FGGGSRTHGQSDRLRAPGSVGGSSDPSRTFRGTRMA) is disordered.

This sequence belongs to the universal ribosomal protein uL3 family. Part of the 50S ribosomal subunit. Forms a cluster with proteins L14 and L19.

One of the primary rRNA binding proteins, it binds directly near the 3'-end of the 23S rRNA, where it nucleates assembly of the 50S subunit. This is Large ribosomal subunit protein uL3 from Chlorobium phaeobacteroides (strain DSM 266 / SMG 266 / 2430).